Here is a 237-residue protein sequence, read N- to C-terminus: Phosphoserine phosphatase (237 aa).

The active-site Nucleophile is D30. D30 and D32 together coordinate Mg(2+). D32 functions as the Proton donor in the catalytic mechanism. Residues E39, R76, 120–121 (SG), and K169 each bind substrate. D192 contacts Mg(2+). Position 195 (N195) interacts with substrate.

The protein belongs to the HAD-like hydrolase superfamily. SerB family. Requires Mg(2+) as cofactor.

The enzyme catalyses O-phospho-L-serine + H2O = L-serine + phosphate. It carries out the reaction O-phospho-D-serine + H2O = D-serine + phosphate. It participates in amino-acid biosynthesis; L-serine biosynthesis; L-serine from 3-phospho-D-glycerate: step 3/3. In terms of biological role, catalyzes the dephosphorylation of phosphoserine (P-Ser) in vitro. Also catalyzes the dephosphorylation of phosphothreonine (P-Thr) in vitro. The sequence is that of Phosphoserine phosphatase from Albidiferax ferrireducens (strain ATCC BAA-621 / DSM 15236 / T118) (Rhodoferax ferrireducens).